Consider the following 838-residue polypeptide: MTGAEIEPSAQAKPEKKAGEEVVAGPERENDVPLVVRPKVRTQATTGARPKTETKSVPAARPKTEAQAMSGARPKTEAQVMGGARPKTEAQGMAGARPKTDARAVGGARSKTDAKAIPGARPEDEAQAWAQSEFGTEAVSQAEGVSQTNAVAWPLATAESGSVTKSKGLSMDRELVNVDAETFPGTQGQKGIQPWFGPGEETNMGSWCYSRPRAREEASNESGFWSADETSTASSFWAGEETSVRSWPREESNTRSRHRAKHQTNPRSRPRSKQEAYVDSWSGSEDEAGNPFSFWAGENTNNLFRPRVREEANIRSKLRTNREDCFESESEDEFYKQSWVLPGEEADSRFRHRDKEDPNTALKLRAQKDVDSDRVKQEPRFEEEVIIGSWFWAEKETSLEGGASAICESEPGTEEGAIGGSAYWAEEKSSLGAVAREEAKPESEEEAIFGSWFWDRDEACFDLNPCPVYKVSDRFRDAAEELNASSRPQTWDEVTVEFKPGLFHGVGFRSTSPFRIPEEASEMLEAKPKNLELSPEGEEQESLLQPDQPSPEFTFQYDPSYRSVREIREHLRARESAESESWSCSCIQCELKIGSEEFEELLLLMDKIRDPFIHEISKIAMGMRSASQFTRDFIRDSGVVSLIETLLNYPSSRVRTSFLENMIHMAPPYPNLNMIETFICQVCEETLAHSVDSLEQLTGIRMLRHLTMTIDYHTLIANYMSGFLSLLTTANARTKFHVLKMLLNLSENPAVAKKLFSAKALSIFVGLFNIEETNDNIQIVIKMFQNISNIIKSGKMSLIDDDFSLEPLISAFREFEELAKQLQAQIDNQNDPEVGQQS.

Disordered stretches follow at residues methionine 1–arginine 121, alanine 218–serine 293, and leucine 531–glutamate 552. A compositionally biased stretch (basic and acidic residues) spans lysine 13–aspartate 31. Positions asparagine 220–serine 235 are enriched in polar residues. Basic residues predominate over residues arginine 255–arginine 271. Phosphoserine occurs at positions 282 and 284. Polar residues predominate over residues serine 542 to glutamate 552.

The protein belongs to the GPRASP family. Interacts with cytoplasmic tails of a variety of G protein-coupled receptors such as muscarinic acetylcholine receptor M1/CHRM1 and calcitonin receptor/CALCR.

May play a role in regulation of a variety of G-protein coupled receptors. This chain is G-protein coupled receptor-associated sorting protein 2 (GPRASP2), found in Pongo abelii (Sumatran orangutan).